The primary structure comprises 393 residues: Methylthioribose kinase (393 aa).

Residues asparagine 38, lysine 53, and 107–109 contribute to the ATP site; that span reads EDL. A substrate-binding site is contributed by aspartate 225. 242 to 244 serves as a coordination point for ATP; that stretch reads DPE. Position 332 (arginine 332) interacts with substrate.

This sequence belongs to the methylthioribose kinase family. In terms of assembly, homodimer.

It catalyses the reaction 5-(methylsulfanyl)-D-ribose + ATP = 5-(methylsulfanyl)-alpha-D-ribose 1-phosphate + ADP + H(+). It participates in amino-acid biosynthesis; L-methionine biosynthesis via salvage pathway; S-methyl-5-thio-alpha-D-ribose 1-phosphate from S-methyl-5'-thioadenosine (hydrolase route): step 2/2. Catalyzes the phosphorylation of methylthioribose into methylthioribose-1-phosphate. The sequence is that of Methylthioribose kinase from Bacillus cereus (strain ZK / E33L).